The following is a 158-amino-acid chain: Mitotic-spindle organizing protein 2A (158 aa).

Ser34 carries the post-translational modification Phosphoserine. Positions 84 to 158 (RLASEPQDPA…PGKSPTQGST (75 aa)) are disordered. The span at 112–122 (SAALGGVLALA) shows a compositional bias: low complexity. Residues 128 to 140 (EGSSQRMPRQPSA) show a composition bias toward polar residues. A Phosphoserine modification is found at Ser152.

The protein belongs to the MOZART2 family. Associates with the gamma-tubulin ring complex (gTuRC) consisting of TUBGCP2, TUBGCP3, TUBGCP4, TUBGCP5 and TUBGCP6 and gamma-tubulin TUBG1 or TUBG2; within the complex, interacts with TUBGCP2; the interaction plays a role in gTuRC activation.

Its subcellular location is the cytoplasm. The protein resides in the cytoskeleton. It is found in the microtubule organizing center. The protein localises to the centrosome. It localises to the spindle. Functionally, required for the recruitment and the assembly of the gamma-tubulin ring complex (gTuRC) at the centrosome. The gTuRC regulates the minus-end nucleation of alpha-beta tubulin heterodimers that grow into microtubule protafilaments, a critical step in centrosome duplication and spindle formation. This Homo sapiens (Human) protein is Mitotic-spindle organizing protein 2A (MZT2A).